The chain runs to 387 residues: 3-ketoacyl-CoA thiolase (387 aa).

Cys-91 serves as the catalytic Acyl-thioester intermediate. Residues His-343 and Cys-373 each act as proton acceptor in the active site.

The protein belongs to the thiolase-like superfamily. Thiolase family. In terms of assembly, heterotetramer of two alpha chains (FadB) and two beta chains (FadA).

The protein resides in the cytoplasm. The enzyme catalyses an acyl-CoA + acetyl-CoA = a 3-oxoacyl-CoA + CoA. It participates in lipid metabolism; fatty acid beta-oxidation. Functionally, catalyzes the final step of fatty acid oxidation in which acetyl-CoA is released and the CoA ester of a fatty acid two carbons shorter is formed. The sequence is that of 3-ketoacyl-CoA thiolase from Aliivibrio fischeri (strain ATCC 700601 / ES114) (Vibrio fischeri).